A 146-amino-acid polypeptide reads, in one-letter code: VHLTPEEKALVIGLWAKVNVKEYGGEALGRLLVVYPWTQRFFEHFGDLSSASAIMNNPKVKAHGEKVFTSFGDGLKHLEDLKGAFAELSELHCDKLHVDPENFRLLGNVLVCVLARHFGKEFSPEAQAAYQKVVAGVANALAHKYH.

N-acetylvaline is present on V1. Residues 2-146 (HLTPEEKALV…VANALAHKYH (145 aa)) enclose the Globin domain. Residue K59 is modified to N6-acetyllysine. Position 63 (H63) interacts with heme b. At K82 the chain carries N6-acetyllysine. Heme b is bound at residue H92. C93 bears the S-nitrosocysteine mark. At K144 the chain carries N6-acetyllysine.

It belongs to the globin family. In terms of assembly, heterotetramer of two alpha chains and two beta chains. In terms of tissue distribution, red blood cells.

In terms of biological role, involved in oxygen transport from the lung to the various peripheral tissues. This Trichechus inunguis (Amazon manatee) protein is Hemoglobin subunit beta (HBB).